The sequence spans 422 residues: Serine--tRNA ligase (422 aa).

229–231 (TAE) contributes to the L-serine binding site. Residues 260 to 262 (RRE) and Val-276 contribute to the ATP site. Glu-283 provides a ligand contact to L-serine. An ATP-binding site is contributed by 349–352 (EVTS). Thr-384 is an L-serine binding site.

This sequence belongs to the class-II aminoacyl-tRNA synthetase family. Type-1 seryl-tRNA synthetase subfamily. Homodimer. The tRNA molecule binds across the dimer.

Its subcellular location is the cytoplasm. It carries out the reaction tRNA(Ser) + L-serine + ATP = L-seryl-tRNA(Ser) + AMP + diphosphate + H(+). The enzyme catalyses tRNA(Sec) + L-serine + ATP = L-seryl-tRNA(Sec) + AMP + diphosphate + H(+). The protein operates within aminoacyl-tRNA biosynthesis; selenocysteinyl-tRNA(Sec) biosynthesis; L-seryl-tRNA(Sec) from L-serine and tRNA(Sec): step 1/1. Functionally, catalyzes the attachment of serine to tRNA(Ser). Is also able to aminoacylate tRNA(Sec) with serine, to form the misacylated tRNA L-seryl-tRNA(Sec), which will be further converted into selenocysteinyl-tRNA(Sec). In Treponema denticola (strain ATCC 35405 / DSM 14222 / CIP 103919 / JCM 8153 / KCTC 15104), this protein is Serine--tRNA ligase.